Reading from the N-terminus, the 67-residue chain is Small ribosomal subunit protein eS17 (67 aa).

The protein belongs to the eukaryotic ribosomal protein eS17 family.

In Korarchaeum cryptofilum (strain OPF8), this protein is Small ribosomal subunit protein eS17.